A 310-amino-acid polypeptide reads, in one-letter code: AT-hook motif nuclear-localized protein 15 (310 aa).

Disordered stretches follow at residues 15 to 112 (VESP…KESP) and 239 to 310 (EEEQ…PPSY). 2 stretches are compositionally biased toward polar residues: residues 31 to 41 (SNNNNPPTMTR) and 51 to 67 (TTNNSGSPNTQTQSQEE). A DNA-binding region (a.T hook) is located at residues 88-100 (RRPRGRPPGSKNK). Over residues 94–104 (PPGSKNKPKSP) the composition is skewed to low complexity. Positions 112 to 251 (PNSLQSHVLE…QQQEQPLQLE (140 aa)) constitute a PPC domain. Pro residues predominate over residues 301–310 (GPPPRAPPSY).

It is found in the nucleus. Its function is as follows. Transcription factor that specifically binds AT-rich DNA sequences related to the nuclear matrix attachment regions (MARs). Binds the DNA sequence GNFEI (GA-negative feedback element I) in the GA3OX1 promoter. Negatively regulates plant innate immunity (PTI) to pathogens through the down-regulation of the PAMP-triggered FRK1 expression. The polypeptide is AT-hook motif nuclear-localized protein 15 (Arabidopsis thaliana (Mouse-ear cress)).